The primary structure comprises 364 residues: MSSLYEKASDFDTATLQTRMVQPFTRYAAHRHLVLSWYRYTLRITNYVPISNLLRRQTREVVRETILKHRGTQSSWKVLQLLEDMKQLNSHLAVAKAVGAWQIIQKYAAKPTPQEERLPMPAKHYNDPSKDKEAHYYWRYHRDLTRKHLLPAVIPNDYMEKLIAPLARHASDLRTLGIVQRNIQRSPKAYLSYTMVGSDRLWFVRSAVNRKKRQSRRLTAMIVALRRAAQRSLDMSNRLKEEVIWATHEAKWEQLLATGTLPPDGAKSDWKPGRAWLEPYEAAFRNQLANRKRTSQKLKRYSAQISKVHLPYYIKCSAAMHTRRAKRFECFQKELHTVNPFVPGRDLGSLLSKWRMVNGKNYYR.

Belongs to the RRG1 family.

The protein resides in the mitochondrion. Functionally, essential for respiratory growth and required for mitochondrial protein synthesis. Required for vacuolar acidification. This chain is Required for respiratory growth protein 1, mitochondrial (RRG1), found in Eremothecium gossypii (strain ATCC 10895 / CBS 109.51 / FGSC 9923 / NRRL Y-1056) (Yeast).